We begin with the raw amino-acid sequence, 263 residues long: Indole-3-glycerol phosphate synthase (263 aa).

This sequence belongs to the TrpC family.

It catalyses the reaction 1-(2-carboxyphenylamino)-1-deoxy-D-ribulose 5-phosphate + H(+) = (1S,2R)-1-C-(indol-3-yl)glycerol 3-phosphate + CO2 + H2O. It participates in amino-acid biosynthesis; L-tryptophan biosynthesis; L-tryptophan from chorismate: step 4/5. The polypeptide is Indole-3-glycerol phosphate synthase (Laribacter hongkongensis (strain HLHK9)).